Here is a 174-residue protein sequence, read N- to C-terminus: ATP-dependent protease subunit HslV (174 aa).

The active site involves Thr2. Residues Gly157, Cys160, and Thr163 each coordinate Na(+).

It belongs to the peptidase T1B family. HslV subfamily. As to quaternary structure, a double ring-shaped homohexamer of HslV is capped on each side by a ring-shaped HslU homohexamer. The assembly of the HslU/HslV complex is dependent on binding of ATP.

The protein resides in the cytoplasm. The catalysed reaction is ATP-dependent cleavage of peptide bonds with broad specificity.. Its activity is regulated as follows. Allosterically activated by HslU binding. Protease subunit of a proteasome-like degradation complex believed to be a general protein degrading machinery. In Shewanella piezotolerans (strain WP3 / JCM 13877), this protein is ATP-dependent protease subunit HslV.